A 64-amino-acid chain; its full sequence is MPGIRVKEGESIESALKRFKKATEKAGILSEIRKREHYEKPSVKRKKKALAAKKRAVKKARKSF.

The interval 39-64 (EKPSVKRKKKALAAKKRAVKKARKSF) is disordered. The span at 43–64 (VKRKKKALAAKKRAVKKARKSF) shows a compositional bias: basic residues.

This sequence belongs to the bacterial ribosomal protein bS21 family.

The chain is Small ribosomal subunit protein bS21 (rpsU) from Myxococcus xanthus.